The sequence spans 274 residues: Bis(5'-nucleosyl)-tetraphosphatase, symmetrical (274 aa).

This sequence belongs to the Ap4A hydrolase family.

It catalyses the reaction P(1),P(4)-bis(5'-adenosyl) tetraphosphate + H2O = 2 ADP + 2 H(+). Hydrolyzes diadenosine 5',5'''-P1,P4-tetraphosphate to yield ADP. This Shewanella baltica (strain OS223) protein is Bis(5'-nucleosyl)-tetraphosphatase, symmetrical.